The sequence spans 154 residues: Myoglobin (154 aa).

A Globin domain is found at 2–148 (VLTDAEWHLV…FRKDIAAKYK (147 aa)). His65 contributes to the nitrite binding site. O2 is bound at residue His65. Residue Thr68 is modified to Phosphothreonine. His94 lines the heme b pocket.

Belongs to the globin family. In terms of assembly, monomeric.

It is found in the cytoplasm. It localises to the sarcoplasm. It carries out the reaction Fe(III)-heme b-[protein] + nitric oxide + H2O = Fe(II)-heme b-[protein] + nitrite + 2 H(+). It catalyses the reaction H2O2 + AH2 = A + 2 H2O. In terms of biological role, monomeric heme protein which primary function is to store oxygen and facilitate its diffusion within muscle tissues. Reversibly binds oxygen through a pentacoordinated heme iron and enables its timely and efficient release as needed during periods of heightened demand. Depending on the oxidative conditions of tissues and cells, and in addition to its ability to bind oxygen, it also has a nitrite reductase activity whereby it regulates the production of bioactive nitric oxide. Under stress conditions, like hypoxia and anoxia, it also protects cells against reactive oxygen species thanks to its pseudoperoxidase activity. The chain is Myoglobin (MB) from Balaenoptera physalus (Fin whale).